The sequence spans 389 residues: Large envelope protein (389 aa).

Met-1 is subject to N-acetylmethionine. Gly-2 carries N-myristoyl glycine; by host lipidation. Residues 2-108 are pre-S1; sequence GTNLSVPNPL…PPLRDTHPQA (107 aa). Residues 2 to 163 are pre-S; sequence GTNLSVPNPL…LSTTGDPVPN (162 aa). Residues 2–170 are Virion surface; in external conformation-facing; that stretch reads GTNLSVPNPL…VPNMENIASG (169 aa). Over 2 to 242 the chain is Intravirion; in internal conformation; that stretch reads GTNLSVPNPL…PGYRWMCLRR (241 aa). A pre-S2 region spans residues 109 to 163; sequence MQWNSTTFHQTLQDPRVRALYFPAGGSSSGTVNPVQNTASSISSILSTTGDPVPN. A helical membrane pass occupies residues 171–191; it reads LLGPLLVLQAGFFSLTKILTI. At 192–242 the chain is on the intravirion; in external conformation side; the sequence is PLSLDSWWTSLNFLGETPVCLGQNSQSQISSHSPTCCPPICPGYRWMCLRR. Residues 243–263 traverse the membrane as a helical segment; the sequence is FIIFLCILLLCLIFLLVLLDY. Over 264–337 the chain is Virion surface; it reads QGMLPVCPLI…WASVRFSWLS (74 aa). The N-linked (GlcNAc...) asparagine; by host glycan is linked to Asn-309. A helical membrane pass occupies residues 338-358; it reads LLVPFVQWFVGLSPTVWLSVI. Topologically, residues 359–364 are intravirion; the sequence is WMMWFW. The chain crosses the membrane as a helical span at residues 365–387; it reads GPSLYNILSPFMPLLPIFFCLWV. The Virion surface portion of the chain corresponds to 388 to 389; the sequence is YI.

It belongs to the orthohepadnavirus major surface antigen family. Interacts (via its myristoylated pre-S1 region) with the host SLC10A1/NTCP; this interaction is essential for viral entry. In terms of assembly, in its internal form (Li-HBsAg), interacts with the capsid protein and with the isoform S. Interacts with host chaperone CANX. As to quaternary structure, associates with host chaperone CANX through its pre-S2 N glycan; this association may be essential for isoform M proper secretion. Interacts with isoform L. Interacts with the antigens of satellite virus HDV (HDVAgs); this interaction is required for encapsidation of HDV genomic RNA. Isoform M is N-terminally acetylated by host at a ratio of 90%, and N-glycosylated by host at the pre-S2 region. Post-translationally, myristoylated; this modification is essential for its interaction with the host protein SLC10A1/NTCP.

Its subcellular location is the virion membrane. The large envelope protein exists in two topological conformations, one which is termed 'external' or Le-HBsAg and the other 'internal' or Li-HBsAg. In its external conformation the protein attaches the virus to cell receptors and thereby initiating infection. This interaction determines the species specificity and liver tropism. This attachment induces virion internalization predominantly through caveolin-mediated endocytosis. The large envelope protein also assures fusion between virion membrane and endosomal membrane. In its internal conformation the protein plays a role in virion morphogenesis and mediates the contact with the nucleocapsid like a matrix protein. Its function is as follows. The middle envelope protein plays an important role in the budding of the virion. It is involved in the induction of budding in a nucleocapsid independent way. In this process the majority of envelope proteins bud to form subviral lipoprotein particles of 22 nm of diameter that do not contain a nucleocapsid. This is Large envelope protein from Hepatitis B virus genotype B2 (isolate Indonesia/pIDW420/1988) (HBV-B).